Consider the following 693-residue polypeptide: C6 finger domain transcription factor nscR (693 aa).

A DNA-binding region (zn(2)-C6 fungal-type) is located at residues cysteine 17 to cysteine 43. The tract at residues alanine 589–serine 608 is disordered.

It localises to the nucleus. Transcription factor that specifically regulates the neosartoricin B biosynthesis gene cluster. This Trichophyton rubrum (strain ATCC MYA-4607 / CBS 118892) (Athlete's foot fungus) protein is C6 finger domain transcription factor nscR.